A 392-amino-acid chain; its full sequence is Vascular endothelial growth factor A, long form (392 aa).

Disordered stretches follow at residues 1 to 44 (MTDR…VEGV) and 73 to 174 (DKPI…GPGR). Basic and acidic residues predominate over residues 89-104 (PGPEKRGEEEKEEERG). Low complexity-rich tracts occupy residues 121–143 (AAVC…ASVP) and 158–174 (PRSP…GPGR). Intrachain disulfides connect Cys-229/Cys-271, Cys-260/Cys-305, and Cys-264/Cys-307. N-linked (GlcNAc...) asparagine glycosylation is present at Asn-278. Positions 309–320 (PKKDRTKPEKKS) are enriched in basic and acidic residues. The disordered stretch occupies residues 309-337 (PKKDRTKPEKKSVRGKGKGQKRKRKKSRF). The segment covering 321 to 337 (VRGKGKGQKRKRKKSRF) has biased composition (basic residues).

This sequence belongs to the PDGF/VEGF growth factor family. In terms of assembly, homodimer; disulfide-linked. Also found as heterodimer with PGF. Interacts with NRP1. Interacts with isoform 2 of BSG. Interacts with CD82; this interaction inhibits VEGFA-mediated signaling pathway. In terms of processing, produced by use of an alternative upstream CUG codon and post-translationally processed into the N-terminal N-VEGF form and the C-terminal secreted VEGFA form. In terms of tissue distribution, in developing embryos, expressed mainly in the choroid plexus, paraventricular neuroepithelium, placenta and kidney glomeruli. Also found in bronchial epithelium, adrenal gland and in seminiferous tubules of testis. High expression continues in kidney glomeruli and choroid plexus in adults.

It is found in the cytoplasm. It localises to the nucleus. The protein resides in the secreted. The protein localises to the endoplasmic reticulum. Its subcellular location is the golgi apparatus. It is found in the extracellular space. It localises to the extracellular matrix. The protein resides in the cell membrane. Functionally, participates in the induction of key genes involved in the response to hypoxia and in the induction of angiogenesis such as HIF1A. Involved in protecting cells from hypoxia-mediated cell death. In terms of biological role, growth factor active in angiogenesis, vasculogenesis and endothelial cell growth. Induces endothelial cell proliferation, promotes cell migration, inhibits apoptosis and induces permeabilization of blood vessels. Binds to the FLT1/VEGFR1 and KDR/VEGFR2 receptors, heparan sulfate and heparin. Binds to the NRP1/neuropilin-1 receptor. Binding to NRP1 receptor initiates a signaling pathway needed for motor neuron axon guidance and cell body migration, including for the caudal migration of facial motor neurons from rhombomere 4 to rhombomere 6 during embryonic development. Also binds the DEAR/FBXW7-AS1 receptor. May play a role in increasing vascular permeability during lactation, when increased transport of molecules from the blood is required for efficient milk protein synthesis. This chain is Vascular endothelial growth factor A, long form (Vegfa), found in Mus musculus (Mouse).